The sequence spans 548 residues: Probable inorganic phosphate transporter 1-5 (548 aa).

The Cytoplasmic portion of the chain corresponds to 1–23; sequence MVQDRKVLDALDTAKTQWYHFTA. A helical transmembrane segment spans residues 24 to 44; the sequence is VVIAGMGFFTDAYDLFSISLV. At 45 to 69 the chain is on the extracellular side; sequence TKLLGRIYYFNPASKSPGSLPPNVS. A helical membrane pass occupies residues 70 to 90; that stretch reads AAVNGVAFCGTLAGQLFFGWL. The Cytoplasmic segment spans residues 91–98; it reads GDKMGRKK. A helical membrane pass occupies residues 99 to 119; that stretch reads VYGMTLMLMVICCLASGLSFG. Topologically, residues 120–123 are extracellular; sequence SSAK. A helical membrane pass occupies residues 124–144; the sequence is GVMATLCFFRFWLGFGIGGDY. The Cytoplasmic segment spans residues 145–163; that stretch reads PLSATIMSEYANKRTRGAF. The chain crosses the membrane as a helical span at residues 164 to 184; it reads IAAVFAMQGFGNLTGGIVAII. The Extracellular segment spans residues 185-210; it reads VSAAFKLRFDAPAYRDDRAGSTVPQA. A helical membrane pass occupies residues 211–231; that stretch reads DYAWRIVLMFGAIPALLTYYW. Over 232-303 the chain is Cytoplasmic; the sequence is RMKMPETARY…REFARRHGHH (72 aa). A helical transmembrane segment spans residues 304–324; it reads LLGTTVCWFVLDIAYYSQNLF. Residues 325–355 lie on the Extracellular side of the membrane; that stretch reads QKDIYTAVQWLPKADTMSALEEMFKISRAQT. The chain crosses the membrane as a helical span at residues 356-376; sequence LVALCGTIPGYWFTVLFIDIV. Residues 377–378 lie on the Cytoplasmic side of the membrane; it reads GR. A helical transmembrane segment spans residues 379 to 399; it reads FAIQLGGFFLMTAFMLGLAVP. Topologically, residues 400–405 are extracellular; that stretch reads YHHWTT. A helical membrane pass occupies residues 406–426; sequence PGNHVGFVVMYAFTFFFANFG. Residues 427-449 lie on the Cytoplasmic side of the membrane; it reads PNSTTFIVPAEIFPARLRSTCHG. Residues 450–470 traverse the membrane as a helical segment; sequence ISSAAGKMGAIVGSFGFLYAA. Over 471 to 490 the chain is Extracellular; that stretch reads QSTDPSKTDAGYPRGIGVRN. Residues 491 to 511 traverse the membrane as a helical segment; the sequence is SLFLLAGCNVVGFLFTFLVPE. Over 512-548 the chain is Cytoplasmic; it reads SKGKSLEELSGENEMEAEPAAATNSYRQTVPDSGQSE. The disordered stretch occupies residues 518-548; that stretch reads EELSGENEMEAEPAAATNSYRQTVPDSGQSE. Residues 533 to 548 are compositionally biased toward polar residues; the sequence is ATNSYRQTVPDSGQSE.

This sequence belongs to the major facilitator superfamily. Phosphate:H(+) symporter (TC 2.A.1.9) family. As to expression, expressed at low levels in roots.

It localises to the membrane. Its function is as follows. High-affinity transporter for external inorganic phosphate. This is Probable inorganic phosphate transporter 1-5 (PHT1-5) from Oryza sativa subsp. japonica (Rice).